The following is a 445-amino-acid chain: Bifunctional protein GlmU (445 aa).

A pyrophosphorylase region spans residues 1 to 218; it reads MRALVLAAGK…LLEITGVNTR (218 aa). UDP-N-acetyl-alpha-D-glucosamine-binding positions include 6–9, K20, Q69, 74–75, 96–98, G134, E147, N162, and N216; these read LAAG, GT, and YGD. D98 provides a ligand contact to Mg(2+). N216 contacts Mg(2+). The tract at residues 219 to 239 is linker; sequence KTLVWLEEQLRMRKIEELLEN. The segment at 240–445 is N-acetyltransferase; the sequence is GVTILDPATT…GWVLKKRKEE (206 aa). Positions 321 and 339 each coordinate UDP-N-acetyl-alpha-D-glucosamine. Residue H351 is the Proton acceptor of the active site. Residues Y354 and N365 each contribute to the UDP-N-acetyl-alpha-D-glucosamine site. Residues A368, 374–375, S393, A411, and R428 contribute to the acetyl-CoA site; that span reads NY.

It in the N-terminal section; belongs to the N-acetylglucosamine-1-phosphate uridyltransferase family. The protein in the C-terminal section; belongs to the transferase hexapeptide repeat family. Homotrimer. Mg(2+) is required as a cofactor.

Its subcellular location is the cytoplasm. The catalysed reaction is alpha-D-glucosamine 1-phosphate + acetyl-CoA = N-acetyl-alpha-D-glucosamine 1-phosphate + CoA + H(+). It catalyses the reaction N-acetyl-alpha-D-glucosamine 1-phosphate + UTP + H(+) = UDP-N-acetyl-alpha-D-glucosamine + diphosphate. The protein operates within nucleotide-sugar biosynthesis; UDP-N-acetyl-alpha-D-glucosamine biosynthesis; N-acetyl-alpha-D-glucosamine 1-phosphate from alpha-D-glucosamine 6-phosphate (route II): step 2/2. It functions in the pathway nucleotide-sugar biosynthesis; UDP-N-acetyl-alpha-D-glucosamine biosynthesis; UDP-N-acetyl-alpha-D-glucosamine from N-acetyl-alpha-D-glucosamine 1-phosphate: step 1/1. It participates in bacterial outer membrane biogenesis; LPS lipid A biosynthesis. Its function is as follows. Catalyzes the last two sequential reactions in the de novo biosynthetic pathway for UDP-N-acetylglucosamine (UDP-GlcNAc). The C-terminal domain catalyzes the transfer of acetyl group from acetyl coenzyme A to glucosamine-1-phosphate (GlcN-1-P) to produce N-acetylglucosamine-1-phosphate (GlcNAc-1-P), which is converted into UDP-GlcNAc by the transfer of uridine 5-monophosphate (from uridine 5-triphosphate), a reaction catalyzed by the N-terminal domain. This is Bifunctional protein GlmU from Thermotoga maritima (strain ATCC 43589 / DSM 3109 / JCM 10099 / NBRC 100826 / MSB8).